The following is a 295-amino-acid chain: Small ribosomal subunit protein uS2 (295 aa).

Serine 2 carries the N-acetylserine modification. A Phosphoserine modification is found at serine 43. Lysine 52 is modified (N6-acetyllysine). Residues 54 to 113 (TWEKLLLAARAIVAIENPADVSVISSRNTGQRAVLKFAAATGATPIAGRFTPGTFTNQIQ) are interaction with PPP1R16B. Position 89 is an N6-acetyllysine; alternate (lysine 89). Lysine 89 participates in a covalent cross-link: Glycyl lysine isopeptide (Lys-Gly) (interchain with G-Cter in SUMO2); alternate. Threonine 97 is modified (phosphothreonine). Laminin-binding stretches follow at residues 161 to 180 (IPCN…MLAR) and 205 to 229 (RDPE…EFQG). 5 [DE]-W-[ST] repeats span residues 230–232 (EWT), 247–249 (DWS), 266–268 (DWS), 275–277 (DWS), and 293–295 (EWS). A laminin-binding region spans residues 242-295 (QPEVADWSEGVQVPSVPIQQFPTEDWSAQPATEDWSAAPTAQATEWVGATTEWS). The disordered stretch occupies residues 266-295 (DWSAQPATEDWSAAPTAQATEWVGATTEWS).

The protein belongs to the universal ribosomal protein uS2 family. Monomer (37LRP) and homodimer (67LR). Component of the small ribosomal subunit. Mature ribosomes consist of a small (40S) and a large (60S) subunit. The 40S subunit contains about 33 different proteins and 1 molecule of RNA (18S). The 60S subunit contains about 49 different proteins and 3 molecules of RNA (28S, 5.8S and 5S). Interacts with RPS21. Interacts with several laminins including at least LAMB1. Interacts with MDK. The mature dimeric form interacts with PPP1R16B (via its fourth ankyrin repeat). Interacts with PPP1CA only in the presence of PPP1R16B. Acylated. Acylation may be a prerequisite for conversion of the monomeric 37 kDa laminin receptor precursor (37LRP) to the mature dimeric 67 kDa laminin receptor (67LR), and may provide a mechanism for membrane association. Post-translationally, cleaved by stromelysin-3 (ST3) at the cell surface. Cleavage by stromelysin-3 may be a mechanism to alter cell-extracellular matrix interactions. Expressed in most neurons and in a subset of glial cells. The overall distribution of LR correlates with that reported for laminin-1 but also with brain regions classically associated with prion-related neurodegeneration.

The protein resides in the cell membrane. Its subcellular location is the cytoplasm. The protein localises to the nucleus. Required for the assembly and/or stability of the 40S ribosomal subunit. Required for the processing of the 20S rRNA-precursor to mature 18S rRNA in a late step of the maturation of 40S ribosomal subunits. Also functions as a cell surface receptor for laminin. Plays a role in cell adhesion to the basement membrane and in the consequent activation of signaling transduction pathways. May play a role in cell fate determination and tissue morphogenesis. Also acts as a receptor for several other ligands, including the pathogenic prion protein, viruses, and bacteria. Acts as a PPP1R16B-dependent substrate of PPP1CA. This is Small ribosomal subunit protein uS2 (Rpsa) from Rattus norvegicus (Rat).